The chain runs to 519 residues: Putative cytochrome P450 CYP13A1 (519 aa).

Cys465 contacts heme.

It belongs to the cytochrome P450 family. It depends on heme as a cofactor.

Its function is as follows. Cytochromes P450 are a group of heme-thiolate monooxygenases. They oxidize a variety of structurally unrelated compounds, including steroids, fatty acids, and xenobiotics. This Caenorhabditis elegans protein is Putative cytochrome P450 CYP13A1 (cyp-13A1).